Reading from the N-terminus, the 196-residue chain is Large ribosomal subunit protein uL5 (196 aa).

This sequence belongs to the universal ribosomal protein uL5 family. As to quaternary structure, part of the 50S ribosomal subunit; part of the 5S rRNA/L5/L18/L25 subcomplex. Contacts the 5S rRNA and the P site tRNA. Forms a bridge to the 30S subunit in the 70S ribosome.

Its function is as follows. This is one of the proteins that bind and probably mediate the attachment of the 5S RNA into the large ribosomal subunit, where it forms part of the central protuberance. In the 70S ribosome it contacts protein S13 of the 30S subunit (bridge B1b), connecting the 2 subunits; this bridge is implicated in subunit movement. Contacts the P site tRNA; the 5S rRNA and some of its associated proteins might help stabilize positioning of ribosome-bound tRNAs. The chain is Large ribosomal subunit protein uL5 from Acidothermus cellulolyticus (strain ATCC 43068 / DSM 8971 / 11B).